A 109-amino-acid chain; its full sequence is Nucleoid-associated protein Sputw3181_1707 (109 aa).

This sequence belongs to the YbaB/EbfC family. In terms of assembly, homodimer.

The protein localises to the cytoplasm. Its subcellular location is the nucleoid. Functionally, binds to DNA and alters its conformation. May be involved in regulation of gene expression, nucleoid organization and DNA protection. In Shewanella sp. (strain W3-18-1), this protein is Nucleoid-associated protein Sputw3181_1707.